Consider the following 595-residue polypeptide: Chaperone protein HscA homolog (595 aa).

Belongs to the heat shock protein 70 family.

In terms of biological role, chaperone involved in the maturation of iron-sulfur cluster-containing proteins. Has a low intrinsic ATPase activity which is markedly stimulated by HscB. The sequence is that of Chaperone protein HscA homolog from Rickettsia rickettsii (strain Iowa).